We begin with the raw amino-acid sequence, 884 residues long: Alanine--tRNA ligase (884 aa).

4 residues coordinate Zn(2+): histidine 562, histidine 566, cysteine 674, and histidine 678.

The protein belongs to the class-II aminoacyl-tRNA synthetase family. It depends on Zn(2+) as a cofactor.

The protein resides in the cytoplasm. It catalyses the reaction tRNA(Ala) + L-alanine + ATP = L-alanyl-tRNA(Ala) + AMP + diphosphate. Its function is as follows. Catalyzes the attachment of alanine to tRNA(Ala) in a two-step reaction: alanine is first activated by ATP to form Ala-AMP and then transferred to the acceptor end of tRNA(Ala). Also edits incorrectly charged Ser-tRNA(Ala) and Gly-tRNA(Ala) via its editing domain. This chain is Alanine--tRNA ligase, found in Rhizobium etli (strain ATCC 51251 / DSM 11541 / JCM 21823 / NBRC 15573 / CFN 42).